The sequence spans 572 residues: Sulfite reductase [NADPH] hemoprotein beta-component (572 aa).

C437, C443, C482, and C486 together coordinate [4Fe-4S] cluster. C486 is a binding site for siroheme.

Belongs to the nitrite and sulfite reductase 4Fe-4S domain family. As to quaternary structure, alpha(8)-beta(8). The alpha component is a flavoprotein, the beta component is a hemoprotein. Siroheme serves as cofactor. The cofactor is [4Fe-4S] cluster.

It catalyses the reaction hydrogen sulfide + 3 NADP(+) + 3 H2O = sulfite + 3 NADPH + 4 H(+). The protein operates within sulfur metabolism; hydrogen sulfide biosynthesis; hydrogen sulfide from sulfite (NADPH route): step 1/1. Functionally, component of the sulfite reductase complex that catalyzes the 6-electron reduction of sulfite to sulfide. This is one of several activities required for the biosynthesis of L-cysteine from sulfate. The polypeptide is Sulfite reductase [NADPH] hemoprotein beta-component (Bacillus licheniformis (strain ATCC 14580 / DSM 13 / JCM 2505 / CCUG 7422 / NBRC 12200 / NCIMB 9375 / NCTC 10341 / NRRL NRS-1264 / Gibson 46)).